We begin with the raw amino-acid sequence, 369 residues long: Chaperone protein DnaJ (369 aa).

Residues 5–69 enclose the J domain; it reads DYYDVLGISK…NKKAQYDRFG (65 aa). Residues 131–213 form a CR-type zinc finger; that stretch reads GTTKNVSVDI…CSGAGRVKAK (83 aa). 8 residues coordinate Zn(2+): C144, C147, C161, C164, C187, C190, C201, and C204. 4 CXXCXGXG motif repeats span residues 144–151, 161–168, 187–194, and 201–208; these read CGHCHGSG, CSKCHGQG, CPQCQGEG, and CHVCSGAG.

The protein belongs to the DnaJ family. As to quaternary structure, homodimer. Requires Zn(2+) as cofactor.

It localises to the cytoplasm. In terms of biological role, participates actively in the response to hyperosmotic and heat shock by preventing the aggregation of stress-denatured proteins and by disaggregating proteins, also in an autonomous, DnaK-independent fashion. Unfolded proteins bind initially to DnaJ; upon interaction with the DnaJ-bound protein, DnaK hydrolyzes its bound ATP, resulting in the formation of a stable complex. GrpE releases ADP from DnaK; ATP binding to DnaK triggers the release of the substrate protein, thus completing the reaction cycle. Several rounds of ATP-dependent interactions between DnaJ, DnaK and GrpE are required for fully efficient folding. Also involved, together with DnaK and GrpE, in the DNA replication of plasmids through activation of initiation proteins. This chain is Chaperone protein DnaJ, found in Acholeplasma laidlawii.